Consider the following 157-residue polypeptide: UPF0254 protein MTH_1148 (157 aa).

The protein belongs to the UPF0254 family.

This Methanothermobacter thermautotrophicus (strain ATCC 29096 / DSM 1053 / JCM 10044 / NBRC 100330 / Delta H) (Methanobacterium thermoautotrophicum) protein is UPF0254 protein MTH_1148.